The primary structure comprises 189 residues: Peptide deformylase (189 aa).

Residues C116 and H159 each coordinate Fe cation. The active site involves E160. H163 is a binding site for Fe cation.

It belongs to the polypeptide deformylase family. Fe(2+) serves as cofactor.

The catalysed reaction is N-terminal N-formyl-L-methionyl-[peptide] + H2O = N-terminal L-methionyl-[peptide] + formate. In terms of biological role, removes the formyl group from the N-terminal Met of newly synthesized proteins. Requires at least a dipeptide for an efficient rate of reaction. N-terminal L-methionine is a prerequisite for activity but the enzyme has broad specificity at other positions. The polypeptide is Peptide deformylase (Limosilactobacillus fermentum (strain NBRC 3956 / LMG 18251) (Lactobacillus fermentum)).